We begin with the raw amino-acid sequence, 323 residues long: Breast cancer metastasis-suppressor 1-like protein (323 aa).

Positions 1–17 (MPVHSRGDKKETNHHDE) are enriched in basic and acidic residues. Residues 1–56 (MPVHSRGDKKETNHHDEMEVDYAENEGSSSEDEDTESSSVSEDGDSSEMDDEDCER) are disordered. The span at 18 to 53 (MEVDYAENEGSSSEDEDTESSSVSEDGDSSEMDDED) shows a compositional bias: acidic residues. 2 coiled-coil regions span residues 52–84 (EDCE…KERL) and 149–180 (EKLL…ITSE). Ser-197 is modified (phosphoserine). Glycyl lysine isopeptide (Lys-Gly) (interchain with G-Cter in SUMO2) cross-links involve residues Lys-240 and Lys-246.

It belongs to the BRMS1 family. Component of the Sin3/HDAC1 corepressor complex at least composed of BRMS1, BRMS1L and ING2/ING1L. Interacts with HDAC and SIN3A.

The protein resides in the nucleus. In terms of biological role, involved in the histone deacetylase (HDAC1)-dependent transcriptional repression activity. When overexpressed in lung cancer cell line that lacks p53/TP53 expression, inhibits cell growth. The polypeptide is Breast cancer metastasis-suppressor 1-like protein (BRMS1L) (Bos taurus (Bovine)).